Reading from the N-terminus, the 161-residue chain is Arachidonate 5-lipoxygenase-activating protein (161 aa).

Topologically, residues 1–8 (MDQEAVGN) are lumenal. Residues 9–30 (VVLLALVTLISVVQNAFFAHKV) traverse the membrane as a helical segment. Residues 31-52 (EHESKAHNGRSFQRTGTLAFER) lie on the Cytoplasmic side of the membrane. The chain crosses the membrane as a helical span at residues 53–77 (VYTANQNCVDAYPTFLVVLWTAGLL). Topologically, residues 78–80 (CSQ) are lumenal. Residues 81 to 102 (VPAAFAGLMYLFVRQKYFVGYL) traverse the membrane as a helical segment. Residues 103–107 (GERTQ) lie on the Cytoplasmic side of the membrane. An intramembrane segment occupies 108 to 115 (STPGYIFG). Residues 116–128 (KRIILFLFLMSFA) traverse the membrane as a helical segment. At 129–161 (GILNHYLIFFFGSDFENYIRTVSTTISPLLLIP) the chain is on the lumenal side.

This sequence belongs to the MAPEG family. As to quaternary structure, homotrimer. Interacts with LTC4S and ALOX5.

Its subcellular location is the nucleus membrane. The protein resides in the endoplasmic reticulum membrane. Its function is as follows. Required for leukotriene biosynthesis by ALOX5 (5-lipoxygenase). Anchors ALOX5 to the membrane. Binds arachidonic acid, and could play an essential role in the transfer of arachidonic acid to ALOX5. Binds to MK-886, a compound that blocks the biosynthesis of leukotrienes. The chain is Arachidonate 5-lipoxygenase-activating protein (Alox5ap) from Mus musculus (Mouse).